We begin with the raw amino-acid sequence, 558 residues long: Hsp70-Hsp90 organizing protein 3 (558 aa).

TPR repeat units follow at residues 2 to 35, 37 to 69, 70 to 103, and 136 to 173; these read AEEA…SPTN, ILYS…KPDW, SKGY…DPSN, and EKLT…YMKD. One can recognise an STI1 1 domain in the interval 131–170; that stretch reads GKEMWEKLTADPGTRVYLEQDDFVKTMKEIQRNPNNLNLY. The disordered stretch occupies residues 191-232; the sequence is SSGEDTEMKEADERKEPEPEMEPMELTEEERQKKERKEKALK. Over residues 196-208 the composition is skewed to basic and acidic residues; that stretch reads TEMKEADERKEPE. Over residues 209 to 218 the composition is skewed to acidic residues; it reads PEMEPMELTE. Residues 219-232 show a composition bias toward basic and acidic residues; it reads EERQKKERKEKALK. The Bipartite nuclear localization signal motif lies at 227 to 244; it reads KEKALKEKGEGNVAYKKK. TPR repeat units lie at residues 230 to 263, 265 to 297, 305 to 342, 369 to 402, 404 to 436, and 437 to 470; these read ALKE…DDED, SYLT…GREL, ARAL…HRNP, AEEE…NPND, RAYS…DPSF, and TKGY…DPKN. Residues 507 to 546 enclose the STI1 2 domain; that stretch reads DPEVQNILSDPVMRQVLVDFQENPKAAQEHMKNPMVMNKI.

Co-chaperone that forms a complex with HSP70 and HSP90 and preproteins (e.g. chloroplast preproteins). Phosphorylated. Post-translationally, acetylated.

The protein localises to the cytoplasm. Its subcellular location is the nucleus. Mediates the association of the molecular chaperones HSP70 and HSP90. Mediates nuclear encoded chloroplast preproteins binding to HSP90 prior to chloroplastic sorting. Involved in acclimation to heat. The sequence is that of Hsp70-Hsp90 organizing protein 3 (HOP3) from Arabidopsis thaliana (Mouse-ear cress).